The sequence spans 623 residues: Chaperone protein DnaK (623 aa).

Position 175 is a phosphothreonine; by autocatalysis (Thr175). The segment at Pro580 to Lys623 is disordered. A compositionally biased stretch (low complexity) spans Asn591–Ala603. Over residues Glu604 to Lys623 the composition is skewed to basic and acidic residues.

It belongs to the heat shock protein 70 family.

Acts as a chaperone. In Clostridium botulinum (strain Okra / Type B1), this protein is Chaperone protein DnaK.